Consider the following 111-residue polypeptide: uncharacterized protein (111 aa).

Positions 43–72 (NGRAEETEADAPLPEEPSLPDLPDLSDLDS) are disordered. A compositionally biased stretch (low complexity) spans 61–72 (LPDLPDLSDLDS).

This is an uncharacterized protein from Homo sapiens (Human).